A 485-amino-acid polypeptide reads, in one-letter code: Glycogen synthase (485 aa).

ADP-alpha-D-glucose is bound at residue Lys21.

Belongs to the glycosyltransferase 1 family. Bacterial/plant glycogen synthase subfamily.

It catalyses the reaction [(1-&gt;4)-alpha-D-glucosyl](n) + ADP-alpha-D-glucose = [(1-&gt;4)-alpha-D-glucosyl](n+1) + ADP + H(+). The protein operates within glycan biosynthesis; glycogen biosynthesis. Functionally, synthesizes alpha-1,4-glucan chains using ADP-glucose. The polypeptide is Glycogen synthase (Pseudomonas savastanoi pv. phaseolicola (strain 1448A / Race 6) (Pseudomonas syringae pv. phaseolicola (strain 1448A / Race 6))).